The primary structure comprises 224 residues: Ribonuclease 3 (224 aa).

Residues 4–127 form the RNase III domain; that stretch reads IEKLERSLTY…IIGAIHLEAG (124 aa). Glu-40 serves as a coordination point for Mg(2+). Asp-44 is a catalytic residue. Residues Asp-113 and Glu-116 each coordinate Mg(2+). Glu-116 is an active-site residue. One can recognise a DRBM domain in the interval 154 to 223; that stretch reads DYKTKLQEIT…AKIALEKLGA (70 aa).

Belongs to the ribonuclease III family. In terms of assembly, homodimer. The cofactor is Mg(2+).

It is found in the cytoplasm. The catalysed reaction is Endonucleolytic cleavage to 5'-phosphomonoester.. Functionally, digests double-stranded RNA. Involved in the processing of primary rRNA transcript to yield the immediate precursors to the large and small rRNAs (23S and 16S). Processes some mRNAs, and tRNAs when they are encoded in the rRNA operon. Processes pre-crRNA and tracrRNA of type II CRISPR loci if present in the organism. The polypeptide is Ribonuclease 3 (Campylobacter jejuni (strain RM1221)).